The sequence spans 157 residues: MSQVILDLQIACADSQGLPTEGDFQRWLEAVLPLFQPVSEVTIRLVDEAESHDLNLTYRGKDKSTNVLSFPFEAPPEIELPLLGDLIICRQVVEKEAIEQEKALLAHWAHMVVHGSLHLLGYDHIDDDEAEEMELIETEIMHGLGYPDPYISEKDPD.

The Zn(2+) site is built by His114, His118, and His124.

The protein belongs to the endoribonuclease YbeY family. Zn(2+) is required as a cofactor.

It localises to the cytoplasm. Single strand-specific metallo-endoribonuclease involved in late-stage 70S ribosome quality control and in maturation of the 3' terminus of the 16S rRNA. This Yersinia pseudotuberculosis serotype O:1b (strain IP 31758) protein is Endoribonuclease YbeY.